We begin with the raw amino-acid sequence, 236 residues long: MLEPQYKRVLLKLSGEALAGEKGFGLDPNVVTNIATQVKDIVNMGVEVAIVVGGGNYWRGRTGEGMDRTTADYMGMLATVINALALQDSLENLDVLTRVQSAIEMRQIAEPYIRRRAVRHLEKNRVVIFAAGTGNPYFSTDTTAALRAAEIEADVILLAKNVDGVYSADPSIDKTATKFNELTYIDVLKMGLKVMDSTAISLCMDNSIPIKVFGLEDPENIKKVIYGDKIGTYIYS.

ATP is bound at residue 12-15 (KLSG). The interval 20–25 (GEKGFG) is involved in allosteric activation by GTP. Gly-54 serves as a coordination point for UMP. The ATP site is built by Gly-55 and Arg-59. UMP contacts are provided by residues Asp-72 and 133–140 (TGNPYFST). ATP contacts are provided by Asn-161, Tyr-166, and Asp-169.

This sequence belongs to the UMP kinase family. Homohexamer.

Its subcellular location is the cytoplasm. The catalysed reaction is UMP + ATP = UDP + ADP. The protein operates within pyrimidine metabolism; CTP biosynthesis via de novo pathway; UDP from UMP (UMPK route): step 1/1. With respect to regulation, allosterically activated by GTP. Inhibited by UTP. Its function is as follows. Catalyzes the reversible phosphorylation of UMP to UDP. This Alkaliphilus oremlandii (strain OhILAs) (Clostridium oremlandii (strain OhILAs)) protein is Uridylate kinase.